The primary structure comprises 178 residues: Large ribosomal subunit protein uL6 (178 aa).

Belongs to the universal ribosomal protein uL6 family. As to quaternary structure, part of the 50S ribosomal subunit.

This protein binds to the 23S rRNA, and is important in its secondary structure. It is located near the subunit interface in the base of the L7/L12 stalk, and near the tRNA binding site of the peptidyltransferase center. The chain is Large ribosomal subunit protein uL6 from Nautilia profundicola (strain ATCC BAA-1463 / DSM 18972 / AmH).